The primary structure comprises 244 residues: INO80 complex subunit E (244 aa).

A coiled-coil region spans residues 10 to 54 (DYKKKYRNLKRKLKFLIYEHECFQEELRKAQRKLLKVSRDKSFLL). A disordered region spans residues 63–236 (VDEDSSDSDA…SGDDALDGDD (174 aa)). Positions 99–115 (PPLGGAPSPSSLSLPPS) are enriched in low complexity. The span at 157-171 (RPKREKRPRLPRKLK) shows a compositional bias: basic residues. Glycyl lysine isopeptide (Lys-Gly) (interchain with G-Cter in SUMO2) cross-links involve residues K159 and K171. Positions 202–212 (PLPPPKMPPPT) are enriched in pro residues.

As to quaternary structure, component of the chromatin remodeling INO80 complex; specifically part of a complex module associated with the N-terminus of INO80.

Its subcellular location is the nucleus. In terms of biological role, putative regulatory component of the chromatin remodeling INO80 complex which is involved in transcriptional regulation, DNA replication and probably DNA repair. This Homo sapiens (Human) protein is INO80 complex subunit E (INO80E).